Reading from the N-terminus, the 392-residue chain is LL-diaminopimelate aminotransferase (392 aa).

Residues tyrosine 13 and glycine 38 each coordinate substrate. Residues tyrosine 67, 102–103, tyrosine 127, asparagine 177, tyrosine 208, and 236–238 contribute to the pyridoxal 5'-phosphate site; these read SK and SCS. Substrate is bound by residues lysine 103, tyrosine 127, and asparagine 177. N6-(pyridoxal phosphate)lysine is present on lysine 239. Position 247 (arginine 247) interacts with pyridoxal 5'-phosphate. A substrate-binding site is contributed by arginine 366.

It belongs to the class-I pyridoxal-phosphate-dependent aminotransferase family. LL-diaminopimelate aminotransferase subfamily. Homodimer. Pyridoxal 5'-phosphate serves as cofactor.

It catalyses the reaction (2S,6S)-2,6-diaminopimelate + 2-oxoglutarate = (S)-2,3,4,5-tetrahydrodipicolinate + L-glutamate + H2O + H(+). It participates in amino-acid biosynthesis; L-lysine biosynthesis via DAP pathway; LL-2,6-diaminopimelate from (S)-tetrahydrodipicolinate (aminotransferase route): step 1/1. Functionally, involved in the synthesis of meso-diaminopimelate (m-DAP or DL-DAP), required for both lysine and peptidoglycan biosynthesis. Catalyzes the direct conversion of tetrahydrodipicolinate to LL-diaminopimelate. Can also use m-DAP instead of LL-DAP as the amino-group donor. The sequence is that of LL-diaminopimelate aminotransferase from Gloeobacter violaceus (strain ATCC 29082 / PCC 7421).